The following is a 512-amino-acid chain: Glucagon-like peptide 2 receptor (512 aa).

Over 1 to 135 (MRRLWGPGTP…KQNVDHYHHT (135 aa)) the chain is Extracellular. 3 disulfide bridges follow: Cys-43–Cys-65, Cys-56–Cys-97, and Cys-78–Cys-119. The N-linked (GlcNAc...) asparagine glycan is linked to Asn-73. Residues 136–160 (LLSTLQLMYTVGYSLSLISLFLALT) form a helical membrane-spanning segment. Topologically, residues 161-172 (LFLFLRKLHCTR) are cytoplasmic. The chain crosses the membrane as a helical span at residues 173-197 (NYIHMNLFASFILRALVVLVKDMVF). The Extracellular segment spans residues 198-223 (YNSYSRRPDSESGWMSYLSEISASCR). A helical membrane pass occupies residues 224–247 (SVQVLLHYFVGTNHLWLLVEGLYL). Residues 248-261 (HALLEPTVLPERRL) are Cytoplasmic-facing. A helical membrane pass occupies residues 262–283 (WPKYLVVGWAFPMLFVIPWIFV). Over 284–301 (RASLENTGCWAVNENKKI) the chain is Extracellular. The helical transmembrane segment at 302 to 324 (WWIIRGPILLCVTVNFFIFLKIL) threads the bilayer. Residues 325–348 (KLLISKFRAHQMCFRDYKYRLAKS) lie on the Cytoplasmic side of the membrane. The chain crosses the membrane as a helical span at residues 349-367 (TLLLILLMGVHEFLFTFFT). Topologically, residues 368-379 (DDQVQGFSRLIR) are extracellular. A helical transmembrane segment spans residues 380–400 (LFIQLTLSSFHGFLVALQYGF). Over 401–512 (ASREVKAELR…MEEILEESEI (112 aa)) the chain is Cytoplasmic. Residues 458 to 494 (SGVSSHLTAGNLRDHGAQPHRGRGAWPRASSLSESSE) are disordered.

This sequence belongs to the G-protein coupled receptor 2 family.

It localises to the cell membrane. Its function is as follows. This is a receptor for glucagon-like peptide 2. The activity of this receptor is mediated by G proteins which activate adenylyl cyclase. The sequence is that of Glucagon-like peptide 2 receptor (Glp2r) from Mus musculus (Mouse).